A 183-amino-acid polypeptide reads, in one-letter code: A-type ATP synthase subunit E (183 aa).

It belongs to the V-ATPase E subunit family. Has multiple subunits with at least A(3), B(3), C, D, E, F, H, I and proteolipid K(x).

It localises to the cell membrane. Component of the A-type ATP synthase that produces ATP from ADP in the presence of a proton gradient across the membrane. This Methanosarcina barkeri (strain Fusaro / DSM 804) protein is A-type ATP synthase subunit E.